Consider the following 130-residue polypeptide: Small ribosomal subunit protein uS8 (130 aa).

Belongs to the universal ribosomal protein uS8 family. Part of the 30S ribosomal subunit. Contacts proteins S5 and S12.

In terms of biological role, one of the primary rRNA binding proteins, it binds directly to 16S rRNA central domain where it helps coordinate assembly of the platform of the 30S subunit. The protein is Small ribosomal subunit protein uS8 of Wigglesworthia glossinidia brevipalpis.